The chain runs to 504 residues: Ectoine/proline transporter ProP (504 aa).

The next 11 membrane-spanning stretches (helical) occupy residues Phe41–Phe61, Leu71–Val91, Leu118–Leu138, Phe169–Val189, Asp207–Leu227, Leu272–Tyr292, Ala309–Trp329, Pro337–Met357, Ile362–Leu382, Gly399–Thr419, and Ile430–Met450. The tract at residues Asn477 to Ala504 is disordered.

The protein belongs to the major facilitator superfamily.

It localises to the cell membrane. With respect to regulation, uptake is activated by osmotic stress. Inhibited by CCCP. In terms of biological role, involved in the uptake of osmoprotectants. Can transport ectoine and proline. Protons are probably the coupling ions. The polypeptide is Ectoine/proline transporter ProP (Corynebacterium glutamicum (strain ATCC 13032 / DSM 20300 / JCM 1318 / BCRC 11384 / CCUG 27702 / LMG 3730 / NBRC 12168 / NCIMB 10025 / NRRL B-2784 / 534)).